Here is a 272-residue protein sequence, read N- to C-terminus: Pyridoxal phosphate phosphatase YbhA (272 aa).

The active-site Nucleophile is Asp-9. Residue Asp-9 coordinates Mg(2+). Leu-10 lines the phosphate pocket. Asp-11 contacts Mg(2+). Residues 43–44 and Lys-200 contribute to the phosphate site; that span reads TG. Position 223 (Asp-223) interacts with Mg(2+). Asn-226 is a phosphate binding site.

It belongs to the HAD-like hydrolase superfamily. CbbY/CbbZ/Gph/YieH family. The cofactor is Mg(2+). Mn(2+) serves as cofactor. Co(2+) is required as a cofactor. It depends on Zn(2+) as a cofactor.

It catalyses the reaction pyridoxal 5'-phosphate + H2O = pyridoxal + phosphate. Functionally, catalyzes the dephosphorylation of pyridoxal-phosphate (PLP). Can also hydrolyze erythrose-4-phosphate (Ery4P) and fructose-1,6-bis-phosphate (Fru1,6bisP). The polypeptide is Pyridoxal phosphate phosphatase YbhA (ybhA) (Escherichia coli (strain K12)).